Here is a 408-residue protein sequence, read N- to C-terminus: Serine/threonine transporter SstT (408 aa).

A run of 9 helical transmembrane segments spans residues 11-31, 43-63, 82-102, 141-161, 192-212, 216-236, 290-310, 316-336, and 363-383; these read LANG…VALA, FLGS…VFIL, IVVL…ILSM, ALMT…GLAL, IGIF…AIAG, LLAV…PLIV, IPLG…VLTL, LGIQ…AISA, and VAMQ…AAET.

This sequence belongs to the dicarboxylate/amino acid:cation symporter (DAACS) (TC 2.A.23) family.

The protein localises to the cell inner membrane. It carries out the reaction L-serine(in) + Na(+)(in) = L-serine(out) + Na(+)(out). It catalyses the reaction L-threonine(in) + Na(+)(in) = L-threonine(out) + Na(+)(out). In terms of biological role, involved in the import of serine and threonine into the cell, with the concomitant import of sodium (symport system). This Shewanella oneidensis (strain ATCC 700550 / JCM 31522 / CIP 106686 / LMG 19005 / NCIMB 14063 / MR-1) protein is Serine/threonine transporter SstT.